The sequence spans 107 residues: Iron-binding protein IscA (107 aa).

Fe cation-binding residues include cysteine 35, cysteine 99, and cysteine 101.

This sequence belongs to the HesB/IscA family. As to quaternary structure, homodimer; may form tetramers and higher multimers. Fe cation is required as a cofactor.

In terms of biological role, is able to transfer iron-sulfur clusters to apo-ferredoxin. Multiple cycles of [2Fe2S] cluster formation and transfer are observed, suggesting that IscA acts catalytically. Recruits intracellular free iron so as to provide iron for the assembly of transient iron-sulfur cluster in IscU in the presence of IscS, L-cysteine and the thioredoxin reductase system TrxA/TrxB. The polypeptide is Iron-binding protein IscA (Cronobacter sakazakii (strain ATCC BAA-894) (Enterobacter sakazakii)).